Consider the following 169-residue polypeptide: Ribosome maturation factor RimM (169 aa).

The PRC barrel domain occupies 91–167 (EGEYYFADLI…RIVIATDFAH (77 aa)).

Belongs to the RimM family. In terms of assembly, binds ribosomal protein uS19.

The protein localises to the cytoplasm. Its function is as follows. An accessory protein needed during the final step in the assembly of 30S ribosomal subunit, possibly for assembly of the head region. Essential for efficient processing of 16S rRNA. May be needed both before and after RbfA during the maturation of 16S rRNA. It has affinity for free ribosomal 30S subunits but not for 70S ribosomes. This Erythrobacter litoralis (strain HTCC2594) protein is Ribosome maturation factor RimM.